We begin with the raw amino-acid sequence, 701 residues long: MNETSNRDHQVTSKEILDVAFEKSKSKFTTPRQTIQDTEELQSYQQTKRKEFEQHINKNRLNLGQWTRYAKWEIENNHDFPRARSILERALDVNIQHVPFWIQYIQLELSHKNINHARNLMERAINTLPRVNKLWFLYVQTEEMLKNYPMVRAVFERWLDWHPDTSAWDAYINFEARYEEKENVRTIFKKYVHEFPNAGTWYKWIKYEMENNRDDVNTVRAVFESAVDTLLSNKSEENDDDEEFATIISSWTSWEVSCGEASRANEIFKLLLDNKTNKLEISDQTKSSIYTAFVEFEKNFGNKDSIEQSVLIKRRIKYEQEIQNDPYDYDSWWKYMTLLQNSSNKSDLENAFKKVTGNVVHDKHKSIKWRRYIMFWIWYAFWEEMTNNNPVSAREIWNNCLKVIPHKSFTFAKVWIGYSEFELRNSEDGLAKARKILGRAIGQTSINKPKIKIFKYYIDLEKKLGDWNRVRLLFQKWLEVSLLTTSSSELVIEKYVEFESSIEEYDRCDSILSSARQLSENPEYSSSFNLQRLLEITVEFYKEEMQYDKIREIYRALLDKDPNAHNWISFALFESSIPSAEQLEEYLQGDNEEFEATVDESQIESTRNIFEEAMTYFKDKDDKESRLVIIEAWRDFEEVNGSDESLSKVTKRLPVIVRKRRTVGSIEEEYIDYIFPDDESKKLPGKMSKFLANAKKWAQQN.

HAT repeat units follow at residues 43–75 (SYQQ…WEIE), 78–110 (HDFP…LELS), 112–144 (KNIN…TEEM), 146–177 (KNYP…FEAR), 179–210 (EEKE…YEME), 214–253 (DDVN…SWTS), 266–299 (EIFK…FEKN), 309–341 (SVLI…LLQN), 343–378 (SNKS…FWIW), 388–424 (NNPV…FELR), 545–576 (MQYD…FESS), and 601–642 (SQIE…VNGS).

The protein belongs to the crooked-neck family. In terms of assembly, associated with the spliceosome.

Its subcellular location is the nucleus. Involved in pre-mRNA splicing and cell cycle progression. Required for the spliceosome assembly and initiation of the DNA replication. The sequence is that of Pre-mRNA-splicing factor CLF1 (CLF1) from Candida albicans (strain SC5314 / ATCC MYA-2876) (Yeast).